A 291-amino-acid chain; its full sequence is E3 ubiquitin-protein ligase MARCHF8 (291 aa).

The disordered stretch occupies residues 22-72 (YRSKTKEKEREEQNEKTLGHFMSHSSNISKAGSPPSASAPAPVSSFSRTSI). The span at 25–39 (KTKEKEREEQNEKTL) shows a compositional bias: basic and acidic residues. Residues 50 to 72 (SKAGSPPSASAPAPVSSFSRTSI) are compositionally biased toward low complexity. Residues 72 to 133 (ITPSSQDICR…ELCKYEFIME (62 aa)) form an RING-CH-type zinc finger. 8 residues coordinate Zn(2+): Cys-80, Cys-83, Cys-97, Cys-99, His-107, Cys-110, Cys-123, and Cys-126. Transmembrane regions (helical) follow at residues 157-177 (CSVT…YVLI) and 197-217 (FWTK…FMYV). Position 253 is a phosphoserine (Ser-253).

Interacts with CD86. Broadly expressed. Present in immature dendritic cells (at protein level).

The protein localises to the golgi apparatus membrane. It localises to the endoplasmic reticulum membrane. The protein resides in the cytoplasmic vesicle membrane. It is found in the lysosome membrane. Its subcellular location is the early endosome membrane. It carries out the reaction S-ubiquitinyl-[E2 ubiquitin-conjugating enzyme]-L-cysteine + [acceptor protein]-L-lysine = [E2 ubiquitin-conjugating enzyme]-L-cysteine + N(6)-ubiquitinyl-[acceptor protein]-L-lysine.. The protein operates within protein modification; protein ubiquitination. Its function is as follows. E3 ubiquitin-protein ligase that plays several important roles in innate immunity and adaptive immunity. Mediates ubiquitination of CD86 and MHC class II proteins, such as HLA-DR alpha and beta, and promotes their subsequent endocytosis and sorting to lysosomes via multivesicular bodies. Possesses a very broad antiviral activity by specifically inactivating different viral fusion proteins. Targets and ubiquitinates cytoplasmic lysine residues of viral envelope glycoproteins with single transmembrane domains leading to their lysosomal degradation. Therefore, shows broad-spectrum inhibition against many viruses including retroviruses, rhabdoviruses, arenaviruses, sarbecoviruses or influenzaviruses. Strongly blocks human immunodeficiency virus type 1 envelope glycoprotein incorporation into virions by down-regulating its cell surface expression. Also blocks ebola virus glycoprotein/GP incorporation via surface down-regulation. Mediates 'Lys-63'-linked polyubiquitination of influenza M2 to target it to lysosome for degradation. Mediates the regulation of constitutive ubiquitination and trafficking of the viral restriction factor BST2 within the endocytic pathway. Plays a role in maintenance of immune tolerance to self by promoting the turnover and proteasomal degradation of PD-L1/CD274 via ubiquitination. Catalyzes the 'Lys-63'-linked polyubiquitylation of cGAS thereby inhibiting its DNA binding ability and impairing its antiviral innate immunity. Negatively regulates IL7-mediated T-cell homeostasis by mediating 'Lys-27'-linked polyubiquitination of IL7R, leading to its lysosomal degradation. In terms of biological role, (Microbial infection) Mediates 'Lys-63'-linked polyubiquitination of hepatitis C virus/HCV protein NS2 which allows its binding to HGS, an ESCRT-0 complex component, and this interaction is essential for HCV envelopment. This Homo sapiens (Human) protein is E3 ubiquitin-protein ligase MARCHF8.